A 73-amino-acid chain; its full sequence is UPF0346 protein SAS1364 (73 aa).

The protein belongs to the UPF0346 family.

The sequence is that of UPF0346 protein SAS1364 from Staphylococcus aureus (strain MSSA476).